Consider the following 784-residue polypeptide: Protein Skeletor, isoforms B/C (784 aa).

Residues 1 to 28 (MLAMKDKPWLLLFGLLAALSCLASFGDA) form the signal peptide. 2 consecutive DM13 domains span residues 34–143 (GTKI…VSIP) and 151–258 (PQKI…VRLP). One can recognise a DOMON domain in the interval 287–419 (LAFEVRWAVA…GAESVVWAIG (133 aa)). Residues 451–491 (PLPEGARGNSNSSEQEDSAPAAQSSTGGAGYPPAGRPNVEP) form a disordered region.

In terms of assembly, interacts with Chro and Mgtor as part of a macromolecular complex forming the spindle matrix. Chro colocalizes with Skeletor (Skel) on the chromosomes at interphase and on spindle during metaphase.

The protein resides in the cytoplasm. It is found in the cytoskeleton. It localises to the spindle. Its subcellular location is the nucleus. The protein localises to the nucleolus. The protein resides in the chromosome. Functionally, provides structural support to stabilize and organize the microtubule spindle during mitosis (within embryonic somatic cells) and meiosis (within spermatocytes). The role in mitosis regulation depends on the Ran pathway. This chain is Protein Skeletor, isoforms B/C, found in Drosophila melanogaster (Fruit fly).